Here is a 249-residue protein sequence, read N- to C-terminus: MALGAIGDGRLLLLLVGLLSASGPSPTLAIHVYTPREVYGTVGSHVTLSCSFWSSEWISEDISYTWHFQAEGSRDSISIFHYGKGQPYIDDVGSFKERMEWVGNPRRKDGSIVIHNLDYTDNGTFTCDVKNPPDIVGKSSQVTLYVLEKVPTRYGVVLGSIIGGVLLLVALLVAVVYLVRFCWLRRQAVLQRRLSAMEKGKLQRSAKDASKRSRQPPVLYAMLDHSRSAKAAAEKKSKGAPGEARKDKK.

Residues 1 to 29 (MALGAIGDGRLLLLLVGLLSASGPSPTLA) form the signal peptide. The 114-residue stretch at 30 to 143 (IHVYTPREVY…DIVGKSSQVT (114 aa)) folds into the Ig-like V-type domain. The Extracellular portion of the chain corresponds to 30 to 153 (IHVYTPREVY…LYVLEKVPTR (124 aa)). An intrachain disulfide couples cysteine 50 to cysteine 127. A glycan (N-linked (GlcNAc...) asparagine) is linked at asparagine 122. A helical membrane pass occupies residues 154 to 179 (YGVVLGSIIGGVLLLVALLVAVVYLV). The Cytoplasmic segment spans residues 180–249 (RFCWLRRQAV…APGEARKDKK (70 aa)). The segment at 227–249 (RSAKAAAEKKSKGAPGEARKDKK) is disordered.

The protein belongs to the myelin P0 protein family. In terms of tissue distribution, found only in peripheral nervous system Schwann cells.

It localises to the cell membrane. Its function is as follows. Is an adhesion molecule necessary for normal myelination in the peripheral nervous system. It mediates adhesion between adjacent myelin wraps and ultimately drives myelin compaction. In Gallus gallus (Chicken), this protein is Myelin protein P0 (MPZ).